A 317-amino-acid polypeptide reads, in one-letter code: CXXC-type zinc finger protein 5 (317 aa).

A compositionally biased stretch (low complexity) spans 1-49 (MSSLSSGPQDTGGSSSSSSNGSSGSGPKAGVADKSAAVAAAAPASVADD). The tract at residues 1-96 (MSSLSSGPQD…GSGGGSMMGG (96 aa)) is disordered. A compositionally biased stretch (gly residues) spans 83-94 (GGSGGSGGGSMM). The segment at 251-292 (GKKKRKRCGMCAPCRRRINCEQCSSCRNRKTGHQICKFRKCE) adopts a CXXC-type zinc-finger fold. Positions 252–257 (KKKRKR) match the Nuclear localization signal motif. The Zn(2+) site is built by cysteine 258, cysteine 261, cysteine 264, cysteine 270, cysteine 273, cysteine 276, cysteine 286, and cysteine 291.

As to quaternary structure, interacts with DVL1. Interacts with RBPJ.

It localises to the nucleus. The protein resides in the cytoplasm. Functionally, may indirectly participate in activation of the NF-kappa-B and MAPK pathways. Acts as a mediator of BMP4-mediated modulation of canonical Wnt signaling activity in neural stem cells. Required for DNA damage-induced ATM phosphorylation, p53 activation and cell cycle arrest. Involved in myelopoiesis. Binds to the oxygen responsive element of COX4I2 and represses its transcription under hypoxia conditions (4% oxygen), as well as normoxia conditions (20% oxygen). May repress COX4I2 transactivation induced by CHCHD2 and RBPJ. Binds preferentially to DNA containing cytidine-phosphate-guanosine (CpG) dinucleotides over CpH (H=A, T, and C), hemimethylated-CpG and hemimethylated-hydroxymethyl-CpG. The chain is CXXC-type zinc finger protein 5 (CXXC5) from Bos taurus (Bovine).